The following is a 1302-amino-acid chain: RNA-directed RNA polymerase (1302 aa).

Residues 562–823 (VIVGDLEATG…QTHAKQGCYV (262 aa)) enclose the RdRp catalytic domain.

It belongs to the reoviridae RNA-directed RNA polymerase family.

It catalyses the reaction RNA(n) + a ribonucleoside 5'-triphosphate = RNA(n+1) + diphosphate. The sequence is that of RNA-directed RNA polymerase (Segment-1) from Antilocapra americana (Pronghorn).